A 129-amino-acid chain; its full sequence is Transcriptional activator protein (129 aa).

The disordered stretch occupies residues 1–20 (MRSSSPSQPPSIKRAHRQAK). The Nuclear localization signal signature appears at 13–28 (KRAHRQAKKRAIRRRR). The segment at 33-50 (CGCSIYFHLGCAGHGFTH) is a zinc-finger region. Residues 73 to 118 (LFQDTQSRGPTVYQNEGIPRTDTVQPQPEESVASPQSLPELPSLDD) are disordered. Composition is skewed to polar residues over residues 74 to 86 (FQDT…TVYQ) and 94 to 109 (DTVQ…SPQS). Ser-109 is subject to Phosphoserine; by host. Positions 115–129 (SLDDVDDSFWINLFS) are transactivation.

The protein belongs to the geminiviridae transcriptional activator protein family. Monomer. Homodimer. Homooligomer. Self-interaction correlates with nuclear localization and efficient activation of transcription. Monomers suppress local silencing by interacting with and inactivating host adenosine kinase 2 (ADK2) in the cytoplasm. Interacts with and inhibits host SNF1 kinase. Phosphorylated at Ser-109 by A.thaliana KIN10.

It localises to the host nucleus. It is found in the host cytoplasm. Functionally, strong activator of the late viral genes promoters. Enhances the expression of the capsid protein and nuclear shuttle protein. Acts as a suppressor of RNA-mediated gene silencing, also known as post-transcriptional gene silencing (PTGS), a mechanism of plant viral defense that limits the accumulation of viral RNAs. Suppresses the host RNA silencing by inhibiting adenosine kinase 2 (ADK2), a kinase involved in a general methylation pathway. Also suppresses the host basal defense by interacting with and inhibiting SNF1 kinase, a key regulator of cell metabolism implicated in innate antiviral defense. Determines pathogenicity. This is Transcriptional activator protein from Nicotiana tabacum (Common tobacco).